An 89-amino-acid polypeptide reads, in one-letter code: Small ribosomal subunit protein bS20 (89 aa).

Positions 1 to 12 (MANIKSAKKRAK) are enriched in basic residues. The tract at residues 1–22 (MANIKSAKKRAKQTIVRNERNT) is disordered.

Belongs to the bacterial ribosomal protein bS20 family.

Functionally, binds directly to 16S ribosomal RNA. The polypeptide is Small ribosomal subunit protein bS20 (Xanthomonas oryzae pv. oryzae (strain KACC10331 / KXO85)).